Here is a 550-residue protein sequence, read N- to C-terminus: MSWGTELWDQFDNLEKHTQWGIDFLDKYAKFVKERLEIEQNYAKQLRNLVKKYCPKRSAKDEEPRFTSCLSFYNILNELNDYAGQREVVAEEMGHRVYAEIMRYSNDIKGERKSHLQEGRKAQQYLDMCLKQMDNSKRKFERECREAEKAQQTYERLDNDSNATKSDVEKAKQQLHLRTHMADESKNEYAAQLQNYNAEQHKHFYIVIPQVYKHLQEMDERRTVKLSECYKGFADAERKVIPIISKCLEGMVQAAKSVDERRDSQIVVDCFKSGFEPNGDYPFEDYSQHIYRTVSDGTISTPKQESLKPDPRVTVGKAKGKLWLFGKKPKGPALEDFSHLPPEQRRKRLQQRIDELSRELQKEMDQKDALNKMKDVYEKNPQMGDPSSLHPKIAETTSNIERLRMEIHKNEAWLSEVEGKVSQRSERRHSAEANHLVAQGRESPEGSYTEDANQEGRVQPQPHAHPEFDDEFDDDEPLPAIGHCKSLYPFDGNNEGTLAMKEGEVLYIIEEDKGDGWTRARKQNGEEGYVPTSYIDITLEKNSKGAVTYI.

Positions 1 to 263 (MSWGTELWDQ…AAKSVDERRD (263 aa)) constitute an F-BAR domain. Coiled coils occupy residues 66–258 (FTSC…AKSV) and 334–426 (LEDF…QRSE). In terms of domain architecture, REM-1 spans 339 to 416 (HLPPEQRRKR…IHKNEAWLSE (78 aa)). Over residues 423 to 432 (QRSERRHSAE) the composition is skewed to basic and acidic residues. A disordered region spans residues 423–467 (QRSERRHSAEANHLVAQGRESPEGSYTEDANQEGRVQPQPHAHPE). The region spanning 479 to 540 (PAIGHCKSLY…PTSYIDITLE (62 aa)) is the SH3 domain.

The protein belongs to the FNBP1 family. As to quaternary structure, homodimerizes, the dimers can polymerize end-to-end to form filamentous structures. Interacts with GTP-bound cdc42 and wasl/n-wasp.

The protein resides in the cytoplasm. The protein localises to the cytoskeleton. It localises to the cell cortex. Its subcellular location is the cytoplasmic vesicle. It is found in the cell membrane. Its function is as follows. Required to coordinate membrane tubulation with reorganization of the actin cytoskeleton during endocytosis. Promotes cdc42-induced actin polymerization by activating the wasl-waspip complex, the predominant form of wasl/n-wasp in cells. Essential for autophagy of intracellular bacterial pathogens. This is Formin-binding protein 1-like (fnbp1l) from Xenopus tropicalis (Western clawed frog).